A 632-amino-acid chain; its full sequence is 1-deoxy-D-xylulose-5-phosphate synthase (632 aa).

Thiamine diphosphate contacts are provided by residues histidine 87 and 128–130 (GHS). Residue aspartate 159 participates in Mg(2+) binding. Thiamine diphosphate is bound by residues 160-161 (GA), asparagine 188, phenylalanine 295, and glutamate 378. Residue asparagine 188 participates in Mg(2+) binding.

Belongs to the transketolase family. DXPS subfamily. As to quaternary structure, homodimer. It depends on Mg(2+) as a cofactor. The cofactor is thiamine diphosphate.

The catalysed reaction is D-glyceraldehyde 3-phosphate + pyruvate + H(+) = 1-deoxy-D-xylulose 5-phosphate + CO2. It functions in the pathway metabolic intermediate biosynthesis; 1-deoxy-D-xylulose 5-phosphate biosynthesis; 1-deoxy-D-xylulose 5-phosphate from D-glyceraldehyde 3-phosphate and pyruvate: step 1/1. Catalyzes the acyloin condensation reaction between C atoms 2 and 3 of pyruvate and glyceraldehyde 3-phosphate to yield 1-deoxy-D-xylulose-5-phosphate (DXP). This is 1-deoxy-D-xylulose-5-phosphate synthase from Pseudomonas fluorescens (strain SBW25).